A 239-amino-acid chain; its full sequence is Prolyl hydroxylase EGLN3 (239 aa).

The segment at 62-73 (AGPRAGVSKRHL) is beta(2)beta(3) 'finger-like' loop. Positions 88–104 (CEAINFLLSLIDRLVLY) are required for interaction with ADRB2. The Fe2OG dioxygenase domain maps to 116–214 (ERSKAMVACY…RYAMTVWYFD (99 aa)). 3 residues coordinate Fe cation: histidine 135, aspartate 137, and histidine 196. Arginine 205 contributes to the 2-oxoglutarate binding site.

Interacts with ADRB2; the interaction hydroxylates ADRB2 facilitating its ubiquitination by the VHL-E3 ligase complex. Interacts with PAX2; the interaction targets PAX2 for destruction. Interacts with PKM; the interaction hydroxylates PKM in hypoxia. Interacts with WDR83; the interaction leads to almost complete elimination of HIF-mediated reporter activity. Interacts with BCL2 (via its BH4 domain); the interaction disrupts the BAX-BCL4 complex inhibiting the anti-apoptotic activity of BCL2. Fe(2+) serves as cofactor. L-ascorbate is required as a cofactor. Post-translationally, ubiquitinated by SIAH1 and/or SIAH2 in response to the unfolded protein response (UPR), leading to its degradation. Highly expressed in vascular smooth muscle. Moderately expressed in esophagus, stomach, small bowel and aorta. Low levels in tail and kidney. Expression also in pheochromocytoma cell line PC-12.

The protein localises to the nucleus. Its subcellular location is the cytoplasm. The catalysed reaction is L-prolyl-[protein] + 2-oxoglutarate + O2 = trans-4-hydroxy-L-prolyl-[protein] + succinate + CO2. It carries out the reaction L-prolyl-[hypoxia-inducible factor alpha subunit] + 2-oxoglutarate + O2 = trans-4-hydroxy-L-prolyl-[hypoxia-inducible factor alpha subunit] + succinate + CO2. Its function is as follows. Prolyl hydroxylase that mediates hydroxylation of proline residues in target proteins, such as PKM, TELO2, ATF4 and HIF1A. Target proteins are preferentially recognized via a LXXLAP motif. Cellular oxygen sensor that catalyzes, under normoxic conditions, the post-translational formation of 4-hydroxyproline in hypoxia-inducible factor (HIF) alpha proteins. Hydroxylates a specific proline found in each of the oxygen-dependent degradation (ODD) domains (N-terminal, NODD, and C-terminal, CODD) of HIF1A. Also hydroxylates HIF2A. Has a preference for the CODD site for both HIF1A and HIF2A. Hydroxylation on the NODD site by EGLN3 appears to require prior hydroxylation on the CODD site. Hydroxylated HIFs are then targeted for proteasomal degradation via the von Hippel-Lindau ubiquitination complex. Under hypoxic conditions, the hydroxylation reaction is attenuated allowing HIFs to escape degradation resulting in their translocation to the nucleus, heterodimerization with HIF1B, and increased expression of hypoxy-inducible genes. ELGN3 is the most important isozyme in limiting physiological activation of HIFs (particularly HIF2A) in hypoxia. Also hydroxylates PKM in hypoxia, limiting glycolysis. Under normoxia, hydroxylates and regulates the stability of ADRB2. Regulator of cardiomyocyte and neuronal apoptosis. In cardiomyocytes, inhibits the anti-apoptotic effect of BCL2 by disrupting the BAX-BCL2 complex. In neurons, has a NGF-induced proapoptotic effect, probably through regulating CASP3 activity. Also essential for hypoxic regulation of neutrophilic inflammation. Plays a crucial role in DNA damage response (DDR) by hydroxylating TELO2, promoting its interaction with ATR which is required for activation of the ATR/CHK1/p53 pathway. Also mediates hydroxylation of ATF4, leading to decreased protein stability of ATF4. The chain is Prolyl hydroxylase EGLN3 (Egln3) from Rattus norvegicus (Rat).